The primary structure comprises 276 residues: GPN-loop GTPase 3 (276 aa).

13–18 (SSGKST) is a GTP binding site. The Gly-Pro-Asn (GPN)-loop; involved in dimer interface motif lies at 70-72 (GPN). 173-176 (SKMD) lines the GTP pocket. Residues 257–276 (EDQEPKDPDRFEADDLEDDE) are disordered. Residues 259 to 269 (QEPKDPDRFEA) show a composition bias toward basic and acidic residues.

Belongs to the GPN-loop GTPase family. Heterodimers with gpn1 or gpn2. Binds to RNA polymerase II (RNAPII).

The protein localises to the cytoplasm. The protein resides in the nucleus. Functionally, small GTPase required for proper nuclear import of RNA polymerase II and III (RNAPII and RNAPIII). May act at an RNAP assembly step prior to nuclear import. The polypeptide is GPN-loop GTPase 3 (Schizosaccharomyces pombe (strain 972 / ATCC 24843) (Fission yeast)).